The chain runs to 554 residues: CTP synthase (554 aa).

Residues 1–265 (MTPLIFVTGG…DEIVIDQFKL (265 aa)) are amidoligase domain. A CTP-binding site is contributed by S13. S13 provides a ligand contact to UTP. ATP contacts are provided by residues 14–19 (SLGKGI) and D71. 2 residues coordinate Mg(2+): D71 and E139. CTP contacts are provided by residues 146–148 (DIE), 186–191 (KTKPTQ), and K222. UTP contacts are provided by residues 186–191 (KTKPTQ) and K222. In terms of domain architecture, Glutamine amidotransferase type-1 spans 292–545 (TIAVVGKYVD…VKAARARKAG (254 aa)). L-glutamine is bound at residue G353. C380 serves as the catalytic Nucleophile; for glutamine hydrolysis. L-glutamine is bound by residues 381 to 384 (YGMQ), E404, and R471. Catalysis depends on residues H518 and E520.

This sequence belongs to the CTP synthase family. As to quaternary structure, homotetramer.

It catalyses the reaction UTP + L-glutamine + ATP + H2O = CTP + L-glutamate + ADP + phosphate + 2 H(+). The catalysed reaction is L-glutamine + H2O = L-glutamate + NH4(+). The enzyme catalyses UTP + NH4(+) + ATP = CTP + ADP + phosphate + 2 H(+). It participates in pyrimidine metabolism; CTP biosynthesis via de novo pathway; CTP from UDP: step 2/2. Its activity is regulated as follows. Allosterically activated by GTP, when glutamine is the substrate; GTP has no effect on the reaction when ammonia is the substrate. The allosteric effector GTP functions by stabilizing the protein conformation that binds the tetrahedral intermediate(s) formed during glutamine hydrolysis. Inhibited by the product CTP, via allosteric rather than competitive inhibition. Its function is as follows. Catalyzes the ATP-dependent amination of UTP to CTP with either L-glutamine or ammonia as the source of nitrogen. Regulates intracellular CTP levels through interactions with the four ribonucleotide triphosphates. This is CTP synthase from Xylella fastidiosa (strain 9a5c).